Reading from the N-terminus, the 63-residue chain is Anionic peptide 10.1 (63 aa).

Residues M1–A20 form the signal peptide.

The protein belongs to the non-disulfide-bridged peptide (NDBP) superfamily. Long chain multifunctional peptide (group 2) family. In terms of tissue distribution, expressed by the venom gland.

The protein localises to the secreted. The chain is Anionic peptide 10.1 from Lychas mucronatus (Chinese swimming scorpion).